The primary structure comprises 232 residues: Thiamine import ATP-binding protein ThiQ (232 aa).

The region spanning Leu-2 to Ile-230 is the ABC transporter domain. Gly-32–Ser-39 is an ATP binding site.

The protein belongs to the ABC transporter superfamily. Thiamine importer (TC 3.A.1.19.1) family. As to quaternary structure, the complex is composed of two ATP-binding proteins (ThiQ), two transmembrane proteins (ThiP) and a solute-binding protein (ThiB).

It is found in the cell inner membrane. The enzyme catalyses thiamine(out) + ATP + H2O = thiamine(in) + ADP + phosphate + H(+). Its function is as follows. Part of the ABC transporter complex ThiBPQ involved in thiamine import. Responsible for energy coupling to the transport system. The polypeptide is Thiamine import ATP-binding protein ThiQ (Shigella sonnei (strain Ss046)).